Here is a 388-residue protein sequence, read N- to C-terminus: Putative 8-amino-7-oxononanoate synthase (388 aa).

Arginine 18 lines the substrate pocket. 105–106 (GY) lines the pyridoxal 5'-phosphate pocket. A substrate-binding site is contributed by histidine 130. Pyridoxal 5'-phosphate is bound by residues serine 176, 201-204 (DDAH), and 232-235 (TLSK). Lysine 235 is subject to N6-(pyridoxal phosphate)lysine. A substrate-binding site is contributed by threonine 349.

It belongs to the class-II pyridoxal-phosphate-dependent aminotransferase family. BioF subfamily. In terms of assembly, homodimer. Pyridoxal 5'-phosphate is required as a cofactor.

It carries out the reaction 6-carboxyhexanoyl-[ACP] + L-alanine + H(+) = (8S)-8-amino-7-oxononanoate + holo-[ACP] + CO2. Its pathway is cofactor biosynthesis; biotin biosynthesis. Catalyzes the decarboxylative condensation of pimeloyl-[acyl-carrier protein] and L-alanine to produce 8-amino-7-oxononanoate (AON), [acyl-carrier protein], and carbon dioxide. This Acetivibrio thermocellus (strain ATCC 27405 / DSM 1237 / JCM 9322 / NBRC 103400 / NCIMB 10682 / NRRL B-4536 / VPI 7372) (Clostridium thermocellum) protein is Putative 8-amino-7-oxononanoate synthase (bioF).